The sequence spans 641 residues: Fructose-1,6-bisphosphatase class 3 (641 aa).

It belongs to the FBPase class 3 family. Mn(2+) serves as cofactor.

It carries out the reaction beta-D-fructose 1,6-bisphosphate + H2O = beta-D-fructose 6-phosphate + phosphate. The protein operates within carbohydrate biosynthesis; gluconeogenesis. This Latilactobacillus sakei subsp. sakei (strain 23K) (Lactobacillus sakei subsp. sakei) protein is Fructose-1,6-bisphosphatase class 3.